We begin with the raw amino-acid sequence, 151 residues long: Cytochrome c-type biogenesis protein CcmE (151 aa).

Residues 1 to 8 lie on the Cytoplasmic side of the membrane; sequence MNPLRRKR. Residues 9-29 traverse the membrane as a helical; Signal-anchor for type II membrane protein segment; the sequence is LLIILAILVGVGVAVGLALSA. At 30–151 the chain is on the periplasmic side; the sequence is LQQNINLFYT…QSAPTPAKEG (122 aa). Heme-binding residues include histidine 124 and tyrosine 128.

This sequence belongs to the CcmE/CycJ family.

The protein resides in the cell inner membrane. Heme chaperone required for the biogenesis of c-type cytochromes. Transiently binds heme delivered by CcmC and transfers the heme to apo-cytochromes in a process facilitated by CcmF and CcmH. The protein is Cytochrome c-type biogenesis protein CcmE of Pseudomonas fluorescens biotype C.